The primary structure comprises 253 residues: Aminoglycoside nucleotidyltransferase (4') (253 aa).

The N-terminal domain stretch occupies residues M1–E127. 5 residues coordinate ATP: S39, R42, S49, D50, and E52. Mg(2+)-binding residues include D50 and E52. Positions 52 and 67 each coordinate neomycin B. E67, K74, E76, E141, and E145 together coordinate kanamycin A. The C-terminal domain stretch occupies residues A128 to H241. Residues E145, K149, and T187 each coordinate ATP. E145 is a binding site for Mg(2+). E145 (proton acceptor) is an active-site residue.

As to quaternary structure, homodimer. It depends on Mg(2+) as a cofactor.

The enzyme catalyses amikacin + ATP = 4'-adenylylamikacin + diphosphate. The catalysed reaction is kanamycin A + ATP = 4'-adenylylkanamycin A + diphosphate. It carries out the reaction neomycin B + ATP = 4'-adenylylneomycin B + diphosphate. It catalyses the reaction paromomycin + ATP = 4'-adenylylparomomycin + diphosphate. The enzyme catalyses ribostamycin + ATP = 4'-adenylylribostamycin + diphosphate. The catalysed reaction is tobramycin + ATP = 4'-adenylyltobramycin + diphosphate. It carries out the reaction kanamycin A + CTP = 4'-cytidylylkanamycin A + diphosphate. It catalyses the reaction kanamycin A + GTP = 4'-guanylylkanamycin A + diphosphate. The enzyme catalyses kanamycin A + ITP = 4'-inosinylylkanamycin A + diphosphate. The catalysed reaction is dTTP + kanamycin A = 4'-thymidylylkanamycin A + diphosphate. It carries out the reaction kanamycin A + UTP = 4'-uridylylkanamycin A + diphosphate. It catalyses the reaction kanamycin A + dATP = 4'-(2'-deoxyadenylyl)kanamycin A + diphosphate. The enzyme catalyses kanamycin A + dCTP = 4'-(2'-deoxycytidylyl)kanamycin A + diphosphate. The catalysed reaction is kanamycin A + dGTP = 4'-(2'-deoxyguanylyl)kanamycin A + diphosphate. It carries out the reaction dUTP + kanamycin A = 4'-(2'-deoxyuridylyl)kanamycin A + diphosphate. It catalyses the reaction amikacin + GTP = 4'-guanylylamikacin + diphosphate. The enzyme catalyses amikacin + ITP = 4'-inosinylylamikacin + diphosphate. The catalysed reaction is amikacin + CTP = 4'-cytidylylamikacin + diphosphate. It carries out the reaction amikacin + UTP = 4'-uridylylamikacin + diphosphate. It catalyses the reaction amikacin + dTTP = 4'-thymidylylamikacin + diphosphate. Functionally, inactivates aminoglycoside antibiotics such as kanamycin by catalyzing the transfer of a nucleotidyl group from a wide variety of nucleoside triphosphates ((d)ATP, (d)CTP, (d)GTP, ITP, TTP and (d)UTP) to the 4'-hydroxyl group of the aminoglycoside. In vitro, antibiotics without the 4'-hydroxyl but possessing a 4''-hydroxyl group (e.g. sisomicin and gentamicin) are also modifed but with poor specificity. The 3' position of the NTP ribose ring does not tolerate large substitutions (e.g. ddATP) and dNTPs and TTP are better substrates than their NTP counterparts. A short (2.35 Angstrom) hydrogen bond initially facilitates tight binding of the substrate (between Glu-52 and antibiotic) that is subsequently disrupted by the assembly of the active ternary complex. This enables the release of products post-catalysis, a 'catch and release' mechanism. The chain is Aminoglycoside nucleotidyltransferase (4') (knt) from Staphylococcus aureus.